The following is a 416-amino-acid chain: Homogentisate 1,2-dioxygenase (416 aa).

Catalysis depends on histidine 275, which acts as the Proton acceptor. Positions 318 and 324 each coordinate Fe cation. The homogentisate site is built by tyrosine 333 and histidine 354. Residue histidine 354 participates in Fe cation binding.

Belongs to the homogentisate dioxygenase family. Hexamer; dimer of trimers. Requires Fe cation as cofactor.

The enzyme catalyses homogentisate + O2 = 4-maleylacetoacetate + H(+). It participates in amino-acid degradation; L-phenylalanine degradation; acetoacetate and fumarate from L-phenylalanine: step 4/6. Involved in the catabolism of homogentisate (2,5-dihydroxyphenylacetate or 2,5-OH-PhAc), a central intermediate in the degradation of phenylalanine and tyrosine. Catalyzes the oxidative ring cleavage of the aromatic ring of homogentisate to yield maleylacetoacetate. This Legionella pneumophila subsp. pneumophila (strain Philadelphia 1 / ATCC 33152 / DSM 7513) protein is Homogentisate 1,2-dioxygenase.